The primary structure comprises 86 residues: Large ribosomal subunit protein bL28 (86 aa).

It belongs to the bacterial ribosomal protein bL28 family.

The chain is Large ribosomal subunit protein bL28 from Bacteroides thetaiotaomicron (strain ATCC 29148 / DSM 2079 / JCM 5827 / CCUG 10774 / NCTC 10582 / VPI-5482 / E50).